Consider the following 993-residue polypeptide: Desmoglein-3 (993 aa).

The first 23 residues, 1–23, serve as a signal peptide directing secretion; it reads MTCLFPRALGSLALLMVVLLVQG. The propeptide occupies 24-49; that stretch reads ELHVKPGGQHREDGTALQLAKRRYKR. 4 consecutive Cadherin domains span residues 50-157, 158-267, 268-388, and 384-495; these read EWVK…PPIF, SQTI…FPVL, RESQ…PPSK, and RPPS…CPSV. The Extracellular segment spans residues 50-617; sequence EWVKFAKPCR…YGESSWRLGP (568 aa). N-linked (GlcNAc...) asparagine glycosylation is found at Asn-110 and Asn-180. N-linked (GlcNAc...) asparagine glycosylation is found at Asn-459 and Asn-546. A helical membrane pass occupies residues 618 to 638; that stretch reads AAIGLILLGLLMLLLAPLLLL. Over 639–993 the chain is Cytoplasmic; it reads TCDCGSGPIG…LYTKETCSHL (355 aa). A required for interaction with CTNND1 and localization at cell-cell junctions region spans residues 641 to 714; that stretch reads DCGSGPIGGA…NTYAGGTMVE (74 aa). A disordered region spans residues 845–876; the sequence is AKQAKPGPKDSGSGADTCARSMEVPQSGSNRY. 2 Desmoglein repeat repeats span residues 905 to 930 and 931 to 961; these read MSTSGSVHPAVAIPDPLQLGNYLLTE and TYSTSGSFAQPTTVTFDPHVTQNVTVTERVI.

As to quaternary structure, homodimer. Part of a complex that contains DSG3, PKP1, YAP1 and YWHAG; the complex is required for localization of DSG3 and YAP1 to the cell membrane in keratinocytes. Interacts with PKP2. Interacts with CTNND1; the interaction facilitates DSG3 localization and retention at cell-cell junctions. Interacts with CDH1; the interaction is required for CDH1 localization to developing adherens junctions. Interacts with RAC1; the interaction is required for DSG3 translocation to cell-cell junctions, organization of cortical F-actin bundles and actin anchoring at cell-cell junctions. Interacts with DSC3; the interaction may limit the interaction of DSC3 with p38MAPK family members and therefore repress p38MAPK signaling activation. In terms of tissue distribution, expressed in the basal layer of the outer root sheath of the telogen hair club, specifically at the cell membrane between the apex of the cells and the surrounding hair club (at protein level). Expression is less abundant between the lateral margins of the outer root sheath basal cells (at protein level). Expressed in epidermis. Expressed in the epithelium of the tongue.

Its subcellular location is the cell membrane. It is found in the cell junction. The protein localises to the desmosome. The protein resides in the cytoplasm. It localises to the tight junction. In terms of biological role, a component of desmosome cell-cell junctions which are required for positive regulation of cellular adhesion. Required for adherens and desmosome junction assembly in response to mechanical force in keratinocytes. Required for desmosome-mediated cell-cell adhesion of cells surrounding the telogen hair club and the basal layer of the outer root sheath epithelium, consequently is essential for the anchoring of telogen hairs in the hair follicle. Required for the maintenance of the epithelial barrier via promoting desmosome-mediated intercellular attachment of suprabasal epithelium to basal cells. May play a role in the protein stability of the desmosome plaque components DSP, JUP, PKP1, PKP2 and PKP3. Required for YAP1 localization at the plasma membrane in keratinocytes in response to mechanical strain, via the formation of an interaction complex composed of DSG3, PKP1 and YWHAG. May also be involved in the positive regulation of YAP1 target gene transcription and as a result cell proliferation. Positively regulates cellular contractility and cell junction formation via organization of cortical F-actin bundles and anchoring of actin to tight junctions, in conjunction with RAC1. The cytoplasmic pool of DSG3 is required for the localization of CDH1 and CTNNB1 at developing adherens junctions, potentially via modulation of SRC activity. Inhibits keratinocyte migration via suppression of p38MAPK signaling, may therefore play a role in moderating wound healing. The protein is Desmoglein-3 (Dsg3) of Mus musculus (Mouse).